Here is a 412-residue protein sequence, read N- to C-terminus: Na(+)-translocating NADH-quinone reductase subunit B (412 aa).

Transmembrane regions (helical) follow at residues 57–77 (MILV…NVGL), 127–147 (VFFL…EVLF), and 163–183 (SILF…ALGI). An FMN phosphoryl threonine modification is found at Thr236. 5 helical membrane passes run 270 to 290 (GSIG…ILFG), 297 to 317 (IVAG…VIGS), 322 to 342 (MFAM…GMMF), 358 to 378 (WSYG…NPAY), and 381 to 401 (GMML…YLVV).

The protein belongs to the NqrB/RnfD family. As to quaternary structure, composed of six subunits; NqrA, NqrB, NqrC, NqrD, NqrE and NqrF. It depends on FMN as a cofactor.

The protein resides in the cell inner membrane. It carries out the reaction a ubiquinone + n Na(+)(in) + NADH + H(+) = a ubiquinol + n Na(+)(out) + NAD(+). In terms of biological role, NQR complex catalyzes the reduction of ubiquinone-1 to ubiquinol by two successive reactions, coupled with the transport of Na(+) ions from the cytoplasm to the periplasm. NqrA to NqrE are probably involved in the second step, the conversion of ubisemiquinone to ubiquinol. This Klebsiella pneumoniae subsp. pneumoniae (strain ATCC 700721 / MGH 78578) protein is Na(+)-translocating NADH-quinone reductase subunit B.